A 538-amino-acid chain; its full sequence is Bifunctional purine biosynthesis protein PurH (538 aa).

Residues 6–158 (KHIPAPDLHR…KNHAYVATVV (153 aa)) form the MGS-like domain.

This sequence belongs to the PurH family.

It catalyses the reaction (6R)-10-formyltetrahydrofolate + 5-amino-1-(5-phospho-beta-D-ribosyl)imidazole-4-carboxamide = 5-formamido-1-(5-phospho-D-ribosyl)imidazole-4-carboxamide + (6S)-5,6,7,8-tetrahydrofolate. It carries out the reaction IMP + H2O = 5-formamido-1-(5-phospho-D-ribosyl)imidazole-4-carboxamide. Its pathway is purine metabolism; IMP biosynthesis via de novo pathway; 5-formamido-1-(5-phospho-D-ribosyl)imidazole-4-carboxamide from 5-amino-1-(5-phospho-D-ribosyl)imidazole-4-carboxamide (10-formyl THF route): step 1/1. It participates in purine metabolism; IMP biosynthesis via de novo pathway; IMP from 5-formamido-1-(5-phospho-D-ribosyl)imidazole-4-carboxamide: step 1/1. This is Bifunctional purine biosynthesis protein PurH from Brucella abortus (strain S19).